The primary structure comprises 65 residues: Beta-defensin 106A (65 aa).

Residues 1 to 20 form the signal peptide; sequence MRTFLFLFAVLFFLTPAKNE. Disulfide bonds link Cys-26–Cys-53, Cys-33–Cys-47, and Cys-37–Cys-54.

The protein belongs to the beta-defensin family. Monomer. Interacts with CCR2 (via extracellular N-terminal region); this interaction may preferentially require specific tyrosine sulfation on CCR2.

It is found in the secreted. The protein localises to the membrane. Has antibacterial activity. Acts as a ligand for C-C chemokine receptor CCR2. This is Beta-defensin 106A (DEFB106A) from Pongo pygmaeus (Bornean orangutan).